The chain runs to 465 residues: Mothers against decapentaplegic homolog 5 (465 aa).

T2 bears the N-acetylthreonine mark. Residues 13 to 137 (PAVKRLLGWK…YKRVESPVLP (125 aa)) form the MH1 domain. Zn(2+) contacts are provided by C65, C110, C122, and H127. The segment at 163 to 243 (NEPHMPQNAT…GQDNSQPMDT (81 aa)) is disordered. Residues 169-182 (QNATFPDSFHQPNS) are compositionally biased toward polar residues. Positions 186-197 (PLSPNSPYPPSP) are enriched in pro residues. Residues 198–214 (ASSTYPNSPASSGPGSP) show a composition bias toward low complexity. Residues 234-243 (GQDNSQPMDT) show a composition bias toward polar residues. The MH2 domain maps to 271–465 (WCSIVYYELN…SPLNPISSVS (195 aa)). Residues S463 and S465 each carry the phosphoserine modification.

This sequence belongs to the dwarfin/SMAD family. In terms of assembly, homodimer. Forms trimers with the co-SMAD SMAD4. Interacts with PEBP2-alpha subunit and SMURF1. Interacts with SUV39H1 and SUV39H2. Interacts (via MH2 domain) with LEMD3. Interacts with WWP1. Interacts with TMEM119. Interacts with ZNF8. Interacts with RANBP3L. Interacts with HK1. Interacts with HGS; this interaction attenuates BMP signaling. In terms of processing, phosphorylated on serine by BMP (bone morphogenetic proteins) type 1 receptor kinase. Post-translationally, ubiquitin-mediated proteolysis by SMAD-specific E3 ubiquitin ligase SMURF1.

The protein localises to the cytoplasm. It is found in the nucleus. It localises to the mitochondrion. Transcriptional regulator that plays a role in various cellular processes including embryonic development, cell differentiation, angiogenesis and tissue homeostasis. Upon BMP ligand binding to their receptors at the cell surface, is phosphorylated by activated type I BMP receptors (BMPRIs) and associates with SMAD4 to form a heteromeric complex which translocates into the nucleus acting as transcription factor. In turn, the hetero-trimeric complex recognizes cis-regulatory elements containing Smad Binding Elements (SBEs) to modulate the outcome of the signaling network. Non-phosphorylated SMAD5 has a cytoplasmic role in energy metabolism regulation by promoting mitochondrial respiration and glycolysis in response to cytoplasmic pH changes. Mechanistically, interacts with hexokinase 1/HK1 and thereby accelerates glycolysis. The polypeptide is Mothers against decapentaplegic homolog 5 (Smad5) (Rattus norvegicus (Rat)).